The chain runs to 354 residues: Galactoside alpha-(1,2)-fucosyltransferase 2 (354 aa).

The Cytoplasmic portion of the chain corresponds to M1–Q5. A helical; Signal-anchor for type II membrane protein transmembrane segment spans residues V6–T26. Residues H27–H354 are Lumenal-facing. The tract at residues L43–N68 is disordered. Over residues M45–S56 the composition is skewed to polar residues. A compositionally biased stretch (basic and acidic residues) spans P57–N68. N199 is a glycosylation site (N-linked (GlcNAc...) asparagine).

Belongs to the glycosyltransferase 11 family. Specifically expressed in gut.

It is found in the golgi apparatus. The protein localises to the golgi stack membrane. The enzyme catalyses a beta-D-galactosyl-(1-&gt;3)-N-acetyl-beta-D-glucosaminyl derivative + GDP-beta-L-fucose = an alpha-L-Fuc-(1-&gt;2)-beta-D-Gal-(1-&gt;3)-beta-D-GlcNAc derivative + GDP + H(+). The catalysed reaction is a beta-D-galactosyl-(1-&gt;4)-N-acetyl-beta-D-glucosaminyl derivative + GDP-beta-L-fucose = an alpha-L-Fuc-(1-&gt;2)-beta-D-Gal-(1-&gt;4)-beta-D-GlcNAc derivative + GDP + H(+). It catalyses the reaction a ganglioside GM1 (d18:1(4E)) + GDP-beta-L-fucose = a ganglioside Fuc-GM1 (d18:1(4E)) + GDP + H(+). It carries out the reaction a globoside GalGb4Cer (d18:1(4E)) + GDP-beta-L-fucose = a globoside Globo-H (d18:1(4E)) + GDP + H(+). The enzyme catalyses a neolactoside nLc4Cer + GDP-beta-L-fucose = a neolactoside IV(2)-alpha-Fuc-nLc4Cer + GDP + H(+). The catalysed reaction is a neolactoside nLc4Cer(d18:1(4E)) + GDP-beta-L-fucose = a neolactoside IV(2)-alpha-Fuc-nLc4Cer(d18:1(4E)) + GDP + H(+). It catalyses the reaction a ganglioside GM1 + GDP-beta-L-fucose = a ganglioside Fuc-GM1 + GDP + H(+). It carries out the reaction a ganglioside GA1 + GDP-beta-L-fucose = a ganglioside Fuc-GA1 + GDP + H(+). The enzyme catalyses Lc4Cer + GDP-beta-L-fucose = alpha-L-fucosyl-(1-&gt;2)-beta-D-galactosyl-(1-&gt;3)-N-acetyl-beta-D-glucosaminyl-(1-&gt;3)-beta-D-galactosyl-(1-&gt;4)-beta-D-glucosyl-(1&lt;-&gt;1')-ceramide + GDP + H(+). The catalysed reaction is a beta-D-Gal-(1-&gt;3)-beta-D-GlcNAc-(1-&gt;3)-beta-D-Gal-(1-&gt;4)-beta-D-Glc-(1&lt;-&gt;1')-Cer(d18:1(4E)) + GDP-beta-L-fucose = alpha-L-fucosyl-(1-&gt;2)- beta-D-galactosyl-(1-&gt;3)-N-acetyl-beta-D-glucosaminyl-(1-&gt;3)-beta-D-galactosyl-(1-&gt;4)-beta-D-glucosyl-(1&lt;-&gt;1')-N-acylsphing-4-enine + GDP + H(+). It catalyses the reaction a ganglioside GD1b + GDP-beta-L-fucose = a ganglioside Fuc-GD1b + GDP + H(+). It carries out the reaction a lactoside III(4)-a-Fuc-Lc4Cer + GDP-beta-L-fucose = a lactoside IV(2),III(4)-a-[Fuc]2-Lc4Cer + GDP + H(+). The enzyme catalyses beta-D-galactosyl-(1-&gt;3)-N-acetyl-D-galactosamine + GDP-beta-L-fucose = alpha-L-fucosyl-(1-&gt;2)-beta-D-galactosyl-(1-&gt;3)-N-acetyl-D-galactosamine + GDP + H(+). The protein operates within protein modification; protein glycosylation. Its function is as follows. Catalyzes the transfer of L-fucose, from a guanosine diphosphate-beta-L-fucose, to the terminal galactose on both O- and N-linked glycans chains of cell surface glycoproteins and glycolipids and the resulting epitope regulates several processes such as cell-cell interaction including host-microbe interaction, cell surface expression and cell proliferation. Preferentially fucosylates gangliosides GA1 and GM1 in the antrum, cecum and colon and in the female reproductive organs. Fucosylated host glycoproteins or glycolipids mediate interaction with intestinal microbiota influencing its composition. Creates a soluble precursor oligosaccharide FuC-alpha ((1,2)Galbeta-) called the H antigen which is an essential substrate for the final step in the soluble ABO blood group antigen synthesis pathway. This Rattus norvegicus (Rat) protein is Galactoside alpha-(1,2)-fucosyltransferase 2.